Consider the following 587-residue polypeptide: Folylpolyglutamate synthase, mitochondrial (587 aa).

The transit peptide at 1–42 directs the protein to the mitochondrion; the sequence is MSWARSRLCSTLSLAAVSARGATTEGAARRGMSAWPAPQEPG. Residue 106-109 coordinates ATP; the sequence is GKGS. Mg(2+) contacts are provided by Ser130, Glu200, and His228. Residues Arg363 and Asp377 each contribute to the ATP site. Phosphoserine is present on Ser539.

The protein belongs to the folylpolyglutamate synthase family. As to quaternary structure, monomer. A monovalent cation is required as a cofactor. In terms of tissue distribution, with non-specific probe, highest content in kidney and liver and lowest in spleen, lung and small intestine, and readily detectable in all of the tumors except hepatoma. Isoform 1 and isoform 2 expressed in leukemic cells and isoform 4 and isoform 5 in liver cells. Isoform 1 and isoform 2 exclusively expressed in hepatoma and Lewis lung carcinoma. Isoform 1 and isoform 2 also expressed in bone marrow, small intestine and spleen. Kidney expresses isoform 1, isoform 2, isoform 4 and isoform 5.

It is found in the mitochondrion inner membrane. The protein resides in the mitochondrion matrix. The protein localises to the cytoplasm. The catalysed reaction is (6S)-5,6,7,8-tetrahydrofolyl-(gamma-L-Glu)(n) + L-glutamate + ATP = (6S)-5,6,7,8-tetrahydrofolyl-(gamma-L-Glu)(n+1) + ADP + phosphate + H(+). It participates in cofactor biosynthesis; tetrahydrofolylpolyglutamate biosynthesis. Its activity is regulated as follows. Inhibited by ammonium sulfate. Inhibited by pentaglutamate derivative of DDATHF, but isoform 2 is inhibited to a greater extent at lower concentrations of the compound that is isoform 5. Isoform 5 is virtually unaffected by H(4)PteGlu(5) and 5,10-CH(2)-H(4)PteGlu(5) at concentrations that substantially inhibits the activity of isoform 2. Isoform 2 and 5 are equally sensitive to polyglutamates of 10-CHO-H(4)-PteGlu. Its function is as follows. Catalyzes conversion of folates to polyglutamate derivatives allowing concentration of folate compounds in the cell and the intracellular retention of these cofactors, which are important substrates for most of the folate-dependent enzymes that are involved in one-carbon transfer reactions involved in purine, pyrimidine and amino acid synthesis. Dihydrofolate, tetrahydrofolate, 5,10-methylenetetrahydrofolate, 10-formyltetrahydrofolate and 5-formyltetrahydrofolate are the best substrates. Folic acid and 5-methyltetrahydrofolate can also act as substrates. This chain is Folylpolyglutamate synthase, mitochondrial (Fpgs), found in Mus musculus (Mouse).